Reading from the N-terminus, the 261-residue chain is Cytochrome c oxidase subunit 3 (261 aa).

The Mitochondrial matrix segment spans residues 1-15; the sequence is MTHQTHAYHMVNPSP. A helical transmembrane segment spans residues 16–34; that stretch reads WPLTGALSALLMTSGLAMW. Topologically, residues 35–40 are mitochondrial intermembrane; the sequence is FHFNST. A helical membrane pass occupies residues 41-66; it reads LLLALGLLTNILTMYQWWRDIIREST. Over 67-72 the chain is Mitochondrial matrix; the sequence is FQGHHT. Residues 73 to 105 traverse the membrane as a helical segment; sequence SIVQKGLRYGMILFIISEVFFFSGFFWAFYHSS. Residues 106 to 128 lie on the Mitochondrial intermembrane side of the membrane; it reads LAPTPELGGCWPPTGIHPLNPLE. Residues 129–152 form a helical membrane-spanning segment; sequence VPLLNTSVLLASGVSITWAHHSLM. Residues 153 to 155 lie on the Mitochondrial matrix side of the membrane; sequence EGN. A helical membrane pass occupies residues 156–183; the sequence is RKNMLQGLFITISLGVYFTLLQASEYYE. Residues 184–190 lie on the Mitochondrial intermembrane side of the membrane; it reads ASFTISD. The helical transmembrane segment at 191 to 223 threads the bilayer; it reads GVYGSTFFVATGFHGLHVIIGSTFLIVCFLRQL. The Mitochondrial matrix portion of the chain corresponds to 224–232; sequence KFHFTSSHH. A helical membrane pass occupies residues 233 to 256; that stretch reads FGFEAAAWYWHFVDVVWLFLYVSI. The Mitochondrial intermembrane segment spans residues 257–261; that stretch reads YWWGS.

It belongs to the cytochrome c oxidase subunit 3 family. Component of the cytochrome c oxidase (complex IV, CIV), a multisubunit enzyme composed of 14 subunits. The complex is composed of a catalytic core of 3 subunits MT-CO1, MT-CO2 and MT-CO3, encoded in the mitochondrial DNA, and 11 supernumerary subunits COX4I, COX5A, COX5B, COX6A, COX6B, COX6C, COX7A, COX7B, COX7C, COX8 and NDUFA4, which are encoded in the nuclear genome. The complex exists as a monomer or a dimer and forms supercomplexes (SCs) in the inner mitochondrial membrane with NADH-ubiquinone oxidoreductase (complex I, CI) and ubiquinol-cytochrome c oxidoreductase (cytochrome b-c1 complex, complex III, CIII), resulting in different assemblies (supercomplex SCI(1)III(2)IV(1) and megacomplex MCI(2)III(2)IV(2)).

It is found in the mitochondrion inner membrane. It catalyses the reaction 4 Fe(II)-[cytochrome c] + O2 + 8 H(+)(in) = 4 Fe(III)-[cytochrome c] + 2 H2O + 4 H(+)(out). Component of the cytochrome c oxidase, the last enzyme in the mitochondrial electron transport chain which drives oxidative phosphorylation. The respiratory chain contains 3 multisubunit complexes succinate dehydrogenase (complex II, CII), ubiquinol-cytochrome c oxidoreductase (cytochrome b-c1 complex, complex III, CIII) and cytochrome c oxidase (complex IV, CIV), that cooperate to transfer electrons derived from NADH and succinate to molecular oxygen, creating an electrochemical gradient over the inner membrane that drives transmembrane transport and the ATP synthase. Cytochrome c oxidase is the component of the respiratory chain that catalyzes the reduction of oxygen to water. Electrons originating from reduced cytochrome c in the intermembrane space (IMS) are transferred via the dinuclear copper A center (CU(A)) of subunit 2 and heme A of subunit 1 to the active site in subunit 1, a binuclear center (BNC) formed by heme A3 and copper B (CU(B)). The BNC reduces molecular oxygen to 2 water molecules using 4 electrons from cytochrome c in the IMS and 4 protons from the mitochondrial matrix. The protein is Cytochrome c oxidase subunit 3 (MT-CO3) of Equus asinus (Donkey).